The following is a 1914-amino-acid chain: Fatty acid synthase beta subunit stcK (1914 aa).

The acetyltransferase (AT) domain stretch occupies residues 17–395 (LYACFGGQGP…LEGTGMNVVN (379 aa)). The interval 446 to 692 (TRLLGTPHVM…LIVEAPGVKD (247 aa)) is enoyl reductase (ER) domain. The dehydratase (DH) domain stretch occupies residues 1009 to 1509 (GECAWGYAAL…RANDRLRMEI (501 aa)). The 135-residue stretch at 1398-1532 (FLNRHGAPRV…VRVLKESTGE (135 aa)) folds into the MaoC-like domain. The malonyl/palmitoyl transferase (MT/PT) domain stretch occupies residues 1548-1900 (YVFTGQGTQE…IRLVQGVTQS (353 aa)).

The protein belongs to the fungal fatty acid synthetase subunit beta family. [Alpha(6)beta(6)] hexamers of two multifunctional subunits (alpha and beta).

It carries out the reaction acetyl-CoA + n malonyl-CoA + 2n NADPH + 4n H(+) = a long-chain-acyl-CoA + n CoA + n CO2 + 2n NADP(+).. The catalysed reaction is holo-[ACP] + acetyl-CoA = acetyl-[ACP] + CoA. It catalyses the reaction holo-[ACP] + malonyl-CoA = malonyl-[ACP] + CoA. The enzyme catalyses a (3R)-hydroxyacyl-[ACP] = a (2E)-enoyl-[ACP] + H2O. It carries out the reaction a 2,3-saturated acyl-[ACP] + NAD(+) = a (2E)-enoyl-[ACP] + NADH + H(+). The catalysed reaction is (9Z)-octadecenoyl-[ACP] + H2O = (9Z)-octadecenoate + holo-[ACP] + H(+). The protein operates within mycotoxin biosynthesis; sterigmatocystin biosynthesis. Functionally, fatty acid synthase beta subunit; part of the gene cluster that mediates the biosynthesis of sterigmatocystin (ST), a polyketide-derived furanocoumarin which is part of the most toxic and carcinogenic compounds among the known mycotoxins. The first step in the biosynthesis of sterigmatocystin is the production of hexanoate by the fatty acid synthase (FAS) units stcJ and stcK. The polyketide backbone is assembled by the non-reducing polyketide synthase stcA by condensation of the starter hexanoyl-CoA and 7 malonyl-CoA extender units followed by cyclization and release of norsolorinic acid. Norsolorinic acid is the first stable intermediate in the biosynthesis of sterigmatocystin and is converted into averantin (AVN) by the ketoreductase stcE which reduces the hexanoate ketone to an alcohol. Averantin is then oxidized into 5'-hydroxyaverantin (HAVN) by the cytochrome P450 monooxygenase stcF. 5'-hydroxyaverantin is further converted to 5'-oxyaverantin (OAVN) by the 5'-hydroxyaverantin dehydrogenase stcG. The next step is the conversion of OAVN into averufin (AVF) which is catalyzed by a yet to be identified enzyme. The cytochrome P450 monooxygenase stcB and the flavin-binding monooxygenase stcW are both required for the conversion of averufin to 1-hydroxyversicolorone. The esterase stcI probably catalyzes the formation of versiconal hemiacetal acetate from 1-hydroxyversicolorone. The oxydoreductase stcN then probably catalyzes the biosynthetic step from versiconal to versicolorin B (VERB). The next step is performed by the versicolorin B desaturase stcL to produce versicolorin A (VERA). The ketoreductase stcU and the cytochrome P450 monooxygenase stcS are involved in the conversion of versicolorin A to demethylsterigmatocystin. The Baeyer-Villiger oxidas stcQ and the reductase stcR might be involved in the biosynthetic step from versicolorin A to demethylsterigmatocystin. The final step in the biosynthesis of sterigmatocystin is the methylation of demethylsterigmatocystin catalyzed by the methyltransferase stcP. This is Fatty acid synthase beta subunit stcK from Emericella nidulans (strain FGSC A4 / ATCC 38163 / CBS 112.46 / NRRL 194 / M139) (Aspergillus nidulans).